The following is a 300-amino-acid chain: Merozoite surface protein 2 (300 aa).

The N-terminal stretch at 1-20 (MKVIKTLSIINFFIFVTFNI) is a signal peptide. N22 and N36 each carry an N-linked (GlcNAc...) asparagine glycan. Positions 44–226 (EESKPPTGAV…EQTESPELQS (183 aa)) are polymorphic region. The stretch at 51–58 (GAVAGSGA) is one 1; inverted repeat. The segment at 51–110 (GAVAGSGAGAGSGAGAVAGSGAGAVAGSGAGAVAGSGAGAVAGSGAGAVAGSGAVAGSGA) is 7 X 8 AA tandem repeats of G-S-G-A-G-A-V-A. 5 repeat units span residues 61–68 (GSGAGAVA), 69–76 (GSGAGAVA), 77–84 (GSGAGAVA), 85–92 (GSGAGAVA), and 93–100 (GSGAGAVA). Residues 103 to 110 (GAVAGSGA) form a 7; inverted repeat. A disordered region spans residues 111 to 261 (GNGANPGADA…DSQKECTDGN (151 aa)). Residues 123–148 (SPSTPATTTTTTTTNDAEASTSTSSE) show a composition bias toward low complexity. The segment covering 149–165 (NRNHNNAETNPKGKGEV) has biased composition (basic and acidic residues). Composition is skewed to polar residues over residues 167 to 193 (KPNQ…NVPR) and 200 to 228 (KSPT…QSAP). Residue N177 is glycosylated (N-linked (GlcNAc...) asparagine). N249 carries N-linked (GlcNAc...) asparagine glycosylation. A disulfide bridge connects residues C257 and C265. Residues N273 and N274 are each glycosylated (N-linked (GlcNAc...) asparagine). The GPI-anchor amidated asparagine moiety is linked to residue N274. Residues 275-300 (SSNIASINKFVVLISATLVLSFAIFI) constitute a propeptide, removed in mature form.

It is found in the cell membrane. May play a role in the merozoite attachment to the erythrocyte. The sequence is that of Merozoite surface protein 2 from Plasmodium falciparum (isolate imr143).